The following is a 679-amino-acid chain: DNA ligase (679 aa).

NAD(+)-binding positions include 86 to 90 (DEAYD) and 129 to 130 (ST). Lysine 167 functions as the N6-AMP-lysine intermediate in the catalytic mechanism. Residues arginine 183, glutamate 214, and lysine 326 each coordinate NAD(+). Residues cysteine 417, cysteine 420, cysteine 433, and cysteine 439 each coordinate Zn(2+). The BRCT domain maps to 599–679 (GEKSPISGKT…EAYRQLVSLD (81 aa)).

It belongs to the NAD-dependent DNA ligase family. LigA subfamily. Mg(2+) is required as a cofactor. The cofactor is Mn(2+).

It catalyses the reaction NAD(+) + (deoxyribonucleotide)n-3'-hydroxyl + 5'-phospho-(deoxyribonucleotide)m = (deoxyribonucleotide)n+m + AMP + beta-nicotinamide D-nucleotide.. In terms of biological role, DNA ligase that catalyzes the formation of phosphodiester linkages between 5'-phosphoryl and 3'-hydroxyl groups in double-stranded DNA using NAD as a coenzyme and as the energy source for the reaction. It is essential for DNA replication and repair of damaged DNA. This is DNA ligase from Desulfotalea psychrophila (strain LSv54 / DSM 12343).